We begin with the raw amino-acid sequence, 272 residues long: Ribosomal RNA small subunit methyltransferase A (272 aa).

Asn18, Leu20, Gly45, Glu66, Asp91, and Asn113 together coordinate S-adenosyl-L-methionine.

This sequence belongs to the class I-like SAM-binding methyltransferase superfamily. rRNA adenine N(6)-methyltransferase family. RsmA subfamily.

Its subcellular location is the cytoplasm. The enzyme catalyses adenosine(1518)/adenosine(1519) in 16S rRNA + 4 S-adenosyl-L-methionine = N(6)-dimethyladenosine(1518)/N(6)-dimethyladenosine(1519) in 16S rRNA + 4 S-adenosyl-L-homocysteine + 4 H(+). Its function is as follows. Specifically dimethylates two adjacent adenosines (A1518 and A1519) in the loop of a conserved hairpin near the 3'-end of 16S rRNA in the 30S particle. May play a critical role in biogenesis of 30S subunits. This chain is Ribosomal RNA small subunit methyltransferase A, found in Photorhabdus laumondii subsp. laumondii (strain DSM 15139 / CIP 105565 / TT01) (Photorhabdus luminescens subsp. laumondii).